Reading from the N-terminus, the 149-residue chain is Arginine repressor (149 aa).

The protein belongs to the ArgR family.

It localises to the cytoplasm. The protein operates within amino-acid biosynthesis; L-arginine biosynthesis [regulation]. Functionally, regulates arginine biosynthesis genes. This Halalkalibacterium halodurans (strain ATCC BAA-125 / DSM 18197 / FERM 7344 / JCM 9153 / C-125) (Bacillus halodurans) protein is Arginine repressor.